Reading from the N-terminus, the 605-residue chain is Arginine--tRNA ligase (605 aa).

The short motif at 131–141 (ANPTGPMHVGH) is the 'HIGH' region element. The segment at 290–309 (PPPKSKKGQPAPAQAASNSA) is disordered. A compositionally biased stretch (low complexity) spans 298–309 (QPAPAQAASNSA).

This sequence belongs to the class-I aminoacyl-tRNA synthetase family. As to quaternary structure, monomer.

Its subcellular location is the cytoplasm. The catalysed reaction is tRNA(Arg) + L-arginine + ATP = L-arginyl-tRNA(Arg) + AMP + diphosphate. This chain is Arginine--tRNA ligase, found in Anaeromyxobacter sp. (strain Fw109-5).